The primary structure comprises 582 residues: uncharacterized protein (582 aa).

A compositionally biased stretch (basic and acidic residues) spans 1–23 (MAHEGSRQVRDRGVTRSKAEKVR). 3 disordered regions span residues 1 to 29 (MAHEGSRQVRDRGVTRSKAEKVRPPTVPV), 110 to 133 (AVAEDPTWGEDEEPSACTTDSWAQ), and 147 to 221 (LENF…SSAG). Ser242 bears the Phosphoserine mark. 2 disordered regions span residues 310–331 (RPSASCQQQRAGHSDVRLSAHH) and 551–582 (LSSGVPEQEDKEGSTFPPVEQHPIQTGAPKPR). Polar residues predominate over residues 311 to 320 (PSASCQQQRA).

This is an uncharacterized protein from Homo sapiens (Human).